Consider the following 696-residue polypeptide: uncharacterized protein (696 aa).

10 helical membrane passes run 38–58 (IISI…NALA), 107–127 (LIYV…GYVV), 215–235 (AMAS…IFAL), 245–265 (SLFT…VVAL), 292–312 (TLPF…LIYL), 329–349 (VFFV…ILGE), 380–400 (FWVT…LTSA), 402–422 (FGAA…ACIG), 433–453 (FPSL…FLSS), and 457–477 (LVVA…IALP). CBS domains follow at residues 527–587 (RSPE…PMSS) and 617–674 (IHPT…THTG).

The protein belongs to the chloride channel (TC 2.A.49) family.

Its subcellular location is the membrane. Functionally, voltage-gated chloride channel. This is an uncharacterized protein from Schizosaccharomyces pombe (strain 972 / ATCC 24843) (Fission yeast).